Reading from the N-terminus, the 322-residue chain is N-acetyl-gamma-glutamyl-phosphate reductase (322 aa).

Cys117 is a catalytic residue.

Belongs to the NAGSA dehydrogenase family. Type 2 subfamily.

Its subcellular location is the cytoplasm. It carries out the reaction N-acetyl-L-glutamate 5-semialdehyde + phosphate + NADP(+) = N-acetyl-L-glutamyl 5-phosphate + NADPH + H(+). It participates in amino-acid biosynthesis; L-arginine biosynthesis; N(2)-acetyl-L-ornithine from L-glutamate: step 3/4. Functionally, catalyzes the NADPH-dependent reduction of N-acetyl-5-glutamyl phosphate to yield N-acetyl-L-glutamate 5-semialdehyde. In Trichormus variabilis (strain ATCC 29413 / PCC 7937) (Anabaena variabilis), this protein is N-acetyl-gamma-glutamyl-phosphate reductase.